Here is a 518-residue protein sequence, read N- to C-terminus: Lysine--tRNA ligase (518 aa).

The disordered stretch occupies residues 1–28 (MTEPTQPNAAQPDAARPNVAPEMDDNKI). Residues E428 and E435 each contribute to the Mg(2+) site.

It belongs to the class-II aminoacyl-tRNA synthetase family. As to quaternary structure, homodimer. It depends on Mg(2+) as a cofactor.

The protein resides in the cytoplasm. It carries out the reaction tRNA(Lys) + L-lysine + ATP = L-lysyl-tRNA(Lys) + AMP + diphosphate. The sequence is that of Lysine--tRNA ligase from Paraburkholderia phytofirmans (strain DSM 17436 / LMG 22146 / PsJN) (Burkholderia phytofirmans).